The primary structure comprises 205 residues: Octanoyltransferase (205 aa).

Residues 29 to 204 (AETPDEIWIV…HLLQQLDQKN (176 aa)) enclose the BPL/LPL catalytic domain. Substrate-binding positions include 68 to 75 (RGGQVTYH), 135 to 137 (ALG), and 148 to 150 (GVS). Residue Cys-166 is the Acyl-thioester intermediate of the active site.

The protein belongs to the LipB family.

It localises to the cytoplasm. The enzyme catalyses octanoyl-[ACP] + L-lysyl-[protein] = N(6)-octanoyl-L-lysyl-[protein] + holo-[ACP] + H(+). It participates in protein modification; protein lipoylation via endogenous pathway; protein N(6)-(lipoyl)lysine from octanoyl-[acyl-carrier-protein]: step 1/2. Functionally, catalyzes the transfer of endogenously produced octanoic acid from octanoyl-acyl-carrier-protein onto the lipoyl domains of lipoate-dependent enzymes. Lipoyl-ACP can also act as a substrate although octanoyl-ACP is likely to be the physiological substrate. This is Octanoyltransferase from Dechloromonas aromatica (strain RCB).